Consider the following 143-residue polypeptide: Transcriptional regulator MraZ (143 aa).

2 SpoVT-AbrB domains span residues Thr-6–Glu-49 and Ser-78–Val-121.

Belongs to the MraZ family. In terms of assembly, forms oligomers.

Its subcellular location is the cytoplasm. It localises to the nucleoid. The sequence is that of Transcriptional regulator MraZ from Spiroplasma kunkelii.